Reading from the N-terminus, the 433-residue chain is Divalent metal cation transporter MntH (433 aa).

11 helical membrane passes run 32 to 52 (LIFA…GNFA), 62 to 82 (GYDL…FQGL), 101 to 121 (TLPP…AMAT), 131 to 151 (IGIA…TGIV), 168 to 188 (LVIG…LLIV), 209 to 229 (ALTI…LFLH), 256 to 276 (VLAA…MAAG), 296 to 316 (SPLL…ASGV), 345 to 365 (ALTM…TRAL), 366 to 386 (VLSQ…LLWF), and 401 to 421 (ITAI…VILL).

It belongs to the NRAMP family.

Its subcellular location is the cell inner membrane. Its function is as follows. H(+)-stimulated, divalent metal cation uptake system. The chain is Divalent metal cation transporter MntH from Acidiphilium cryptum (strain JF-5).